The chain runs to 162 residues: Transcription elongation factor GreA (162 aa).

The stretch at 45 to 75 (ENAEYEAAREKQAFIEGRIKELEDMAARAEI) forms a coiled coil.

This sequence belongs to the GreA/GreB family.

In terms of biological role, necessary for efficient RNA polymerase transcription elongation past template-encoded arresting sites. The arresting sites in DNA have the property of trapping a certain fraction of elongating RNA polymerases that pass through, resulting in locked ternary complexes. Cleavage of the nascent transcript by cleavage factors such as GreA or GreB allows the resumption of elongation from the new 3'terminus. GreA releases sequences of 2 to 3 nucleotides. The chain is Transcription elongation factor GreA from Rickettsia canadensis (strain McKiel).